A 362-amino-acid polypeptide reads, in one-letter code: Ferrochelatase (362 aa).

The Fe cation site is built by H212 and E294.

The protein belongs to the ferrochelatase family.

The protein resides in the cytoplasm. It carries out the reaction heme b + 2 H(+) = protoporphyrin IX + Fe(2+). Its pathway is porphyrin-containing compound metabolism; protoheme biosynthesis; protoheme from protoporphyrin-IX: step 1/1. Catalyzes the ferrous insertion into protoporphyrin IX. In Leptospira biflexa, this protein is Ferrochelatase.